Here is a 246-residue protein sequence, read N- to C-terminus: Breast cancer metastasis-suppressor 1 (246 aa).

The disordered stretch occupies residues 1–57; that stretch reads MPVQPPSKDTEEMEAEGDSAAEMNGEEEESEEERSGSQTESEEESSEMDDEDYERRR. 2 stretches are compositionally biased toward acidic residues: residues 11–32 and 40–52; these read EEME…ESEE and ESEE…DDED. The stretch at 51–98 forms a coiled coil; sequence EDYERRRSECVSEMLDLEKQFSELKEKLFRERLSQLRLRLEEVGAERA. Glycyl lysine isopeptide (Lys-Gly) (interchain with G-Cter in SUMO2) cross-links involve residues Lys-184 and Lys-242.

The protein belongs to the BRMS1 family. In terms of assembly, homohexamer (Potential). Interacts with SNX6, HDAC1 and RELA. Interacts with ARID4A. Identified in mSin3A corepressor complexes together with SIN3A, SIN3B, RBBP4, RBBP7, SAP30, SUDS3, ARID4A, HDAC1 and HDAC2. Interacts with SPOP; this recruits the protein to a ubiquitin ligase complex containing SPOP and CUL3. Ubiquitinated by a cullin-RING-based BCR (BTB-CUL3-RBX1) E3 ubiquitin-protein ligase complex containing SPOP, leading to proteasomal degradation. As to expression, expression levels are higher in term placentas than in early placentas. Low levels of expression observed in normal pregnancies and in molar pregnancies.

The protein localises to the nucleus. The protein resides in the cytoplasm. Its function is as follows. Transcriptional repressor. Down-regulates transcription activation by NF-kappa-B by promoting the deacetylation of RELA at 'Lys-310'. Promotes HDAC1 binding to promoter regions. Down-regulates expression of anti-apoptotic genes that are controlled by NF-kappa-B. Promotes apoptosis in cells that have inadequate adherence to a substrate, a process called anoikis, and may thereby inhibit metastasis. May be a mediator of metastasis suppression in breast carcinoma. The polypeptide is Breast cancer metastasis-suppressor 1 (BRMS1) (Homo sapiens (Human)).